A 114-amino-acid chain; its full sequence is T cell receptor beta variable 6-5 (114 aa).

An N-terminal signal peptide occupies residues 1 to 21; it reads MSIGLLCCAALSLLWAGPVNA. An Ig-like domain is found at 22–114; that stretch reads GVTQTPKFQV…TSVYFCASSY (93 aa). Residues Cys42 and Cys110 are joined by a disulfide bond. Asn84 is a glycosylation site (N-linked (GlcNAc...) asparagine).

As to quaternary structure, alpha-beta TR is a heterodimer composed of an alpha and beta chain; disulfide-linked. The alpha-beta TR is associated with the transmembrane signaling CD3 coreceptor proteins to form the TR-CD3 (TcR or TCR). The assembly of alpha-beta TR heterodimers with CD3 occurs in the endoplasmic reticulum where a single alpha-beta TR heterodimer associates with one CD3D-CD3E heterodimer, one CD3G-CD3E heterodimer and one CD247 homodimer forming a stable octameric structure. CD3D-CD3E and CD3G-CD3E heterodimers preferentially associate with TR alpha and TR beta chains, respectively. The association of the CD247 homodimer is the last step of TcR assembly in the endoplasmic reticulum and is required for transport to the cell surface.

The protein resides in the cell membrane. V region of the variable domain of T cell receptor (TR) beta chain that participates in the antigen recognition. Alpha-beta T cell receptors are antigen specific receptors which are essential to the immune response and are present on the cell surface of T lymphocytes. Recognize peptide-major histocompatibility (MH) (pMH) complexes that are displayed by antigen presenting cells (APC), a prerequisite for efficient T cell adaptive immunity against pathogens. Binding of alpha-beta TR to pMH complex initiates TR-CD3 clustering on the cell surface and intracellular activation of LCK that phosphorylates the ITAM motifs of CD3G, CD3D, CD3E and CD247 enabling the recruitment of ZAP70. In turn ZAP70 phosphorylates LAT, which recruits numerous signaling molecules to form the LAT signalosome. The LAT signalosome propagates signal branching to three major signaling pathways, the calcium, the mitogen-activated protein kinase (MAPK) kinase and the nuclear factor NF-kappa-B (NF-kB) pathways, leading to the mobilization of transcription factors that are critical for gene expression and essential for T cell growth and differentiation. The T cell repertoire is generated in the thymus, by V-(D)-J rearrangement. This repertoire is then shaped by intrathymic selection events to generate a peripheral T cell pool of self-MH restricted, non-autoaggressive T cells. Post-thymic interaction of alpha-beta TR with the pMH complexes shapes TR structural and functional avidity. In Homo sapiens (Human), this protein is T cell receptor beta variable 6-5.